The chain runs to 580 residues: Tetratricopeptide repeat protein 39C (580 aa).

3 TPR repeats span residues 312–345 (SLFMFFKGRIQRLECQINSALTSFHTALELAVDQ), 350–383 (HVCLYEIGWCSMIELNFKDAFDSFERLKNESRWS), and 482–515 (GLKHLLLGAIHKCLGNSQDALQFFQRAARDELCR).

Belongs to the TTC39 family.

The protein is Tetratricopeptide repeat protein 39C (Ttc39c) of Mus musculus (Mouse).